The following is a 570-amino-acid chain: Phosphoenolpyruvate-protein phosphotransferase (570 aa).

His-189 functions as the Tele-phosphohistidine intermediate in the catalytic mechanism. Arg-296 and Arg-332 together coordinate phosphoenolpyruvate. Positions 431 and 455 each coordinate Mg(2+). Phosphoenolpyruvate contacts are provided by residues 454–455 (ND) and Arg-465. The active-site Proton donor is the Cys-502.

It belongs to the PEP-utilizing enzyme family. Homodimer. Interacts with FloT. It depends on Mg(2+) as a cofactor.

It localises to the cytoplasm. It is found in the membrane raft. The enzyme catalyses L-histidyl-[protein] + phosphoenolpyruvate = N(pros)-phospho-L-histidyl-[protein] + pyruvate. In terms of biological role, general (non sugar-specific) component of the phosphoenolpyruvate-dependent sugar phosphotransferase system (sugar PTS). This major carbohydrate active-transport system catalyzes the phosphorylation of incoming sugar substrates concomitantly with their translocation across the cell membrane. Enzyme I transfers the phosphoryl group from phosphoenolpyruvate (PEP) to the phosphoryl carrier protein (HPr). In Bacillus subtilis (strain 168), this protein is Phosphoenolpyruvate-protein phosphotransferase (ptsI).